A 1342-amino-acid polypeptide reads, in one-letter code: WD repeat-containing protein 19 (1342 aa).

WD repeat units lie at residues 11 to 51 (TWLG…RSEI), 52 to 92 (NLPG…TSQL), 95 to 134 (GMRD…KIPV), 137 to 175 (KHTK…IRQT), 273 to 311 (NHKD…DMYV), and 317 to 356 (EENK…LGDA). TPR repeat units lie at residues 736 to 769 (AQDL…AKHL), 775 to 808 (PFIS…DNKE), 840 to 873 (RVLK…DKAA), 895 to 928 (PKIH…QSVI), 951 to 984 (LDGA…NEAF), and 1020 to 1053 (EKRY…EDNV).

As to quaternary structure, component of the IFT complex A (IFT-A) complex. IFT-A complex is divided into a core subcomplex composed of IFT122:IFT140:WDR19 which is associated with TULP3 and a peripheral subcomplex composed of IFT43:WDR35:TTC21B. Interacts (via C-terminal region) with IFT122 (via C-terminal region). Interacts with BBS1. Interacts with TTC25. As to expression, some isoforms are tissue-specific. Highly expressed in the prostate. Lower expression in the cerebellum, pituitary gland, fetal lung, and pancreas. In normal prostate, expressed in both basal and luminal epithelial cells. No expression detected in fibromuscular stromal cells, endothelial cells, or infiltrating lymphocytes. Uniformed expression in prostate adenocarcinoma cells.

It localises to the cell projection. The protein localises to the cilium. It is found in the cytoplasm. The protein resides in the cytoskeleton. Its subcellular location is the cilium basal body. It localises to the photoreceptor outer segment. The protein localises to the flagellum. Functionally, as component of the IFT complex A (IFT-A), a complex required for retrograde ciliary transport and entry into cilia of G protein-coupled receptors (GPCRs), it is involved in cilia function and/or assembly. Essential for functional IFT-A assembly and ciliary entry of GPCRs. Associates with the BBSome complex to mediate ciliary transport. The chain is WD repeat-containing protein 19 from Homo sapiens (Human).